Consider the following 332-residue polypeptide: Flotillin-like protein FloA (332 aa).

2 helical membrane passes run 6–26 (LGYLILTFVVLLLLVLFFSFV) and 28–48 (VGLWISAAAADVRVGIFYMIG).

The protein belongs to the flotillin-like FloA family. Homooligomerizes.

It is found in the cell membrane. The protein localises to the membrane raft. Functionally, found in functional membrane microdomains (FMM) that may be equivalent to eukaryotic membrane rafts. FMMs are highly dynamic and increase in number as cells age. Flotillins are thought to be important factors in membrane fluidity. The protein is Flotillin-like protein FloA of Symbiobacterium thermophilum (strain DSM 24528 / JCM 14929 / IAM 14863 / T).